Here is a 75-residue protein sequence, read N- to C-terminus: UPF0235 protein Ava_3894 (75 aa).

Residues 1-32 are disordered; sequence MQKKVKVKPNSKQQKIAEQDDGSLTVHLKSPP.

This sequence belongs to the UPF0235 family.

This chain is UPF0235 protein Ava_3894, found in Trichormus variabilis (strain ATCC 29413 / PCC 7937) (Anabaena variabilis).